A 720-amino-acid chain; its full sequence is DNA helicase II (720 aa).

Positions 8-286 constitute a UvrD-like helicase ATP-binding domain; the sequence is DSLNDKQREA…IRLEQNYRST (279 aa). ATP contacts are provided by residues 32–37 and Arg-284; that span reads GSGKTR. A UvrD-like helicase C-terminal domain is found at 287–564; that stretch reads SNILSAANAL…QLMTLHSAKG (278 aa).

The protein belongs to the helicase family. UvrD subfamily.

The enzyme catalyses Couples ATP hydrolysis with the unwinding of duplex DNA by translocating in the 3'-5' direction.. The catalysed reaction is ATP + H2O = ADP + phosphate + H(+). Its function is as follows. A helicase with DNA-dependent ATPase activity. Unwinds DNA duplexes with 3'-5' polarity. Translocates on single-stranded DNA with 3'-5' polarity. Initiates unwinding more efficiently from a nicked substrate than double-stranded DNA. Involved in the post-incision events of nucleotide excision repair and methyl-directed mismatch repair, and probably also in repair of alkylated DNA. This chain is DNA helicase II, found in Escherichia coli (strain K12).